Reading from the N-terminus, the 220-residue chain is GTP cyclohydrolase 1 (220 aa).

Zn(2+)-binding residues include C113, H116, and C184.

Belongs to the GTP cyclohydrolase I family. As to quaternary structure, homomer.

It catalyses the reaction GTP + H2O = 7,8-dihydroneopterin 3'-triphosphate + formate + H(+). It participates in cofactor biosynthesis; 7,8-dihydroneopterin triphosphate biosynthesis; 7,8-dihydroneopterin triphosphate from GTP: step 1/1. This chain is GTP cyclohydrolase 1, found in Hamiltonella defensa subsp. Acyrthosiphon pisum (strain 5AT).